Reading from the N-terminus, the 58-residue chain is Leucine zipper protein 6 (58 aa).

In terms of tissue distribution, widely expressed, highest levels found in brain, placenta, spleen, testis, and ovary. Up-regulated in some tumor cells.

In Homo sapiens (Human), this protein is Leucine zipper protein 6 (LUZP6).